We begin with the raw amino-acid sequence, 197 residues long: Protein GrpE (197 aa).

Residues 1-41 (MSSKEQKTPEGQAPEEIITEQHEEVEAVEPDASAEQVDPRD) are disordered.

Belongs to the GrpE family. In terms of assembly, homodimer.

Its subcellular location is the cytoplasm. Functionally, participates actively in the response to hyperosmotic and heat shock by preventing the aggregation of stress-denatured proteins, in association with DnaK and GrpE. It is the nucleotide exchange factor for DnaK and may function as a thermosensor. Unfolded proteins bind initially to DnaJ; upon interaction with the DnaJ-bound protein, DnaK hydrolyzes its bound ATP, resulting in the formation of a stable complex. GrpE releases ADP from DnaK; ATP binding to DnaK triggers the release of the substrate protein, thus completing the reaction cycle. Several rounds of ATP-dependent interactions between DnaJ, DnaK and GrpE are required for fully efficient folding. The chain is Protein GrpE from Enterobacter sp. (strain 638).